The primary structure comprises 140 residues: Protein BIC1 (140 aa).

Polar residues predominate over residues 1–10 (MMNIDDTTSP). A disordered region spans residues 1 to 71 (MMNIDDTTSP…RVDTGRERLK (71 aa)). Residues 42–68 (ADKKDLALLEEKPKQSQEEDRVDTGRE) are compositionally biased toward basic and acidic residues.

In terms of assembly, interacts with CRY2 in both darkness and light.

It is found in the nucleus. Its function is as follows. Regulates the blue-light dependent dimerization of CRY2 and formation of photobodies. Interacts with photoexited CRY2 to inhibit its activity. Inhibits CRY phosphorylation. This chain is Protein BIC1, found in Arabidopsis thaliana (Mouse-ear cress).